Reading from the N-terminus, the 1385-residue chain is DNA-directed RNA polymerase subunit beta (1385 aa).

It belongs to the RNA polymerase beta chain family. As to quaternary structure, the RNAP catalytic core consists of 2 alpha, 1 beta, 1 beta' and 1 omega subunit. When a sigma factor is associated with the core the holoenzyme is formed, which can initiate transcription.

The enzyme catalyses RNA(n) + a ribonucleoside 5'-triphosphate = RNA(n+1) + diphosphate. DNA-dependent RNA polymerase catalyzes the transcription of DNA into RNA using the four ribonucleoside triphosphates as substrates. The polypeptide is DNA-directed RNA polymerase subunit beta (Sulfurovum sp. (strain NBC37-1)).